Reading from the N-terminus, the 176-residue chain is Large ribosomal subunit protein uL6 (176 aa).

Belongs to the universal ribosomal protein uL6 family. Part of the 50S ribosomal subunit.

Functionally, this protein binds to the 23S rRNA, and is important in its secondary structure. It is located near the subunit interface in the base of the L7/L12 stalk, and near the tRNA binding site of the peptidyltransferase center. The polypeptide is Large ribosomal subunit protein uL6 (Lacticaseibacillus paracasei (strain ATCC 334 / BCRC 17002 / CCUG 31169 / CIP 107868 / KCTC 3260 / NRRL B-441) (Lactobacillus paracasei)).